The sequence spans 668 residues: Fructose-1,6-bisphosphatase class 3 (668 aa).

The protein belongs to the FBPase class 3 family. Mn(2+) serves as cofactor.

It carries out the reaction beta-D-fructose 1,6-bisphosphate + H2O = beta-D-fructose 6-phosphate + phosphate. Its pathway is carbohydrate biosynthesis; gluconeogenesis. The chain is Fructose-1,6-bisphosphatase class 3 from Clostridium botulinum (strain 657 / Type Ba4).